We begin with the raw amino-acid sequence, 281 residues long: NH(3)-dependent NAD(+) synthetase (281 aa).

24-31 (GVSGGVDS) is a binding site for ATP. Residue aspartate 30 participates in Mg(2+) binding. Arginine 145 lines the deamido-NAD(+) pocket. Residue threonine 165 participates in ATP binding. Glutamate 170 is a Mg(2+) binding site. Positions 178 and 185 each coordinate deamido-NAD(+). The ATP site is built by lysine 194 and serine 216.

It belongs to the NAD synthetase family. In terms of assembly, homodimer.

It catalyses the reaction deamido-NAD(+) + NH4(+) + ATP = AMP + diphosphate + NAD(+) + H(+). It participates in cofactor biosynthesis; NAD(+) biosynthesis; NAD(+) from deamido-NAD(+) (ammonia route): step 1/1. Its function is as follows. Catalyzes the ATP-dependent amidation of deamido-NAD to form NAD. Uses ammonia as a nitrogen source. This is NH(3)-dependent NAD(+) synthetase (nadE1) from Thermotoga maritima (strain ATCC 43589 / DSM 3109 / JCM 10099 / NBRC 100826 / MSB8).